Consider the following 742-residue polypeptide: Hapless 2 (742 aa).

An N-terminal signal peptide occupies residues M1 to C19. The Extracellular portion of the chain corresponds to E20–E540. 7 disulfide bridges follow: C30-C40, C118-C147, C129-C182, C148-C312, C150-C168, C295-C319, and C431-C470. The interval L152 to T179 is important for membrane fusion. The helical transmembrane segment at A541–L561 threads the bilayer. The Cytoplasmic segment spans residues A562–E742.

Belongs to the HAP2/GCS1 family.

It localises to the cell membrane. It is found in the cell junction. Functionally, during fertilization, required for the formation of intercellular membrane pores and subsequent exchange of gametic pronuclei between cells. Probably initiates the formation of intercellular membrane pores by inserting part of its extracellular domain into the cell membrane of the adjoining cell in the mating pair. Mating requires the presence of HAP2 on at least one of the two cells. Mating efficiency is high when HAP2 is present on both cells, and is strongly reduced when HAP2 is present on only one of the two cells. The chain is Hapless 2 from Tetrahymena thermophila.